We begin with the raw amino-acid sequence, 142 residues long: Ribonuclease VapC44 (142 aa).

In terms of domain architecture, PINc spans 4–126; it reads LLDVNVLLAL…GRFVTFDQSI (123 aa). Residues Asp-6 and Asp-105 each contribute to the Mg(2+) site.

The protein belongs to the PINc/VapC protein family. Requires Mg(2+) as cofactor.

In terms of biological role, toxic component of a type II toxin-antitoxin (TA) system. An RNase. Its cognate antitoxin is VapB44. The protein is Ribonuclease VapC44 of Mycobacterium tuberculosis (strain CDC 1551 / Oshkosh).